We begin with the raw amino-acid sequence, 207 residues long: N-(5'-phosphoribosyl)anthranilate isomerase (207 aa).

The protein belongs to the TrpF family.

It carries out the reaction N-(5-phospho-beta-D-ribosyl)anthranilate = 1-(2-carboxyphenylamino)-1-deoxy-D-ribulose 5-phosphate. The protein operates within amino-acid biosynthesis; L-tryptophan biosynthesis; L-tryptophan from chorismate: step 3/5. This Stutzerimonas stutzeri (strain A1501) (Pseudomonas stutzeri) protein is N-(5'-phosphoribosyl)anthranilate isomerase.